The sequence spans 52 residues: ATP synthase F(1) complex subunit epsilon, mitochondrial (52 aa).

Residues lysine 21, lysine 32, and lysine 37 each carry the N6-acetyllysine; alternate modification. N6-succinyllysine; alternate is present on residues lysine 21, lysine 32, and lysine 37. Lysine 44 carries the post-translational modification N6-acetyllysine.

This sequence belongs to the eukaryotic ATPase epsilon family. As to quaternary structure, component of the ATP synthase complex composed at least of ATP5F1A/subunit alpha, ATP5F1B/subunit beta, ATP5MC1/subunit c (homooctomer), MT-ATP6/subunit a, MT-ATP8/subunit 8, ATP5ME/subunit e, ATP5MF/subunit f, ATP5MG/subunit g, ATP5MK/subunit k, ATP5MJ/subunit j, ATP5F1C/subunit gamma, ATP5F1D/subunit delta, ATP5F1E/subunit epsilon, ATP5PF/subunit F6, ATP5PB/subunit b, ATP5PD/subunit d, ATP5PO/subunit OSCP. ATP synthase complex consists of a soluble F(1) head domain (subunits alpha(3) and beta(3)) - the catalytic core - and a membrane F(0) domain - the membrane proton channel (subunits c, a, 8, e, f, g, k and j). These two domains are linked by a central stalk (subunits gamma, delta, and epsilon) rotating inside the F1 region and a stationary peripheral stalk (subunits F6, b, d, and OSCP).

It is found in the mitochondrion. Its subcellular location is the mitochondrion inner membrane. Subunit epsilon, of the mitochondrial membrane ATP synthase complex (F(1)F(0) ATP synthase or Complex V) that produces ATP from ADP in the presence of a proton gradient across the membrane which is generated by electron transport complexes of the respiratory chain. ATP synthase complex consist of a soluble F(1) head domain - the catalytic core - and a membrane F(1) domain - the membrane proton channel. These two domains are linked by a central stalk rotating inside the F(1) region and a stationary peripheral stalk. During catalysis, ATP synthesis in the catalytic domain of F(1) is coupled via a rotary mechanism of the central stalk subunits to proton translocation. In vivo, can only synthesize ATP although its ATP hydrolase activity can be activated artificially in vitro. May be essential for the assembly of F(1) and may play an important role in the incorporation of the hydrophobic subunit c into the F(1)-c oligomer rotor of the mitochondrial ATP synthase complex. This Mus musculus (Mouse) protein is ATP synthase F(1) complex subunit epsilon, mitochondrial.